Here is a 689-residue protein sequence, read N- to C-terminus: DNA ligase (689 aa).

NAD(+) contacts are provided by residues 40-44 (DSEYD), 89-90 (SL), and Glu-121. The active-site N6-AMP-lysine intermediate is Lys-123. 4 residues coordinate NAD(+): Arg-144, Glu-179, Lys-295, and Lys-319. The Zn(2+) site is built by Cys-413, Cys-416, Cys-431, and Cys-437. Residues 610-689 (REQNILTGKI…VEWLAFIKNA (80 aa)) form the BRCT domain.

This sequence belongs to the NAD-dependent DNA ligase family. LigA subfamily. Requires Mg(2+) as cofactor. It depends on Mn(2+) as a cofactor.

It catalyses the reaction NAD(+) + (deoxyribonucleotide)n-3'-hydroxyl + 5'-phospho-(deoxyribonucleotide)m = (deoxyribonucleotide)n+m + AMP + beta-nicotinamide D-nucleotide.. Its function is as follows. DNA ligase that catalyzes the formation of phosphodiester linkages between 5'-phosphoryl and 3'-hydroxyl groups in double-stranded DNA using NAD as a coenzyme and as the energy source for the reaction. It is essential for DNA replication and repair of damaged DNA. This Rickettsia prowazekii (strain Madrid E) protein is DNA ligase.